Consider the following 399-residue polypeptide: Elongation factor Tu (399 aa).

The 200-residue stretch at 10–209 (NPHVNIGTIG…EVDSYIPTPE (200 aa)) folds into the tr-type G domain. The segment at 19-26 (GHVYHGKT) is G1. Residue 19-26 (GHVYHGKT) coordinates GTP. Thr26 provides a ligand contact to Mg(2+). The segment at 60-64 (GITIA) is G2. The tract at residues 81–84 (DCPG) is G3. GTP-binding positions include 81-85 (DCPGH) and 136-139 (NKQD). The tract at residues 136–139 (NKQD) is G4. Positions 174–176 (SAL) are G5.

It belongs to the TRAFAC class translation factor GTPase superfamily. Classic translation factor GTPase family. EF-Tu/EF-1A subfamily. As to quaternary structure, monomer.

It is found in the cytoplasm. It catalyses the reaction GTP + H2O = GDP + phosphate + H(+). Its function is as follows. GTP hydrolase that promotes the GTP-dependent binding of aminoacyl-tRNA to the A-site of ribosomes during protein biosynthesis. In Helicobacter pylori (strain J99 / ATCC 700824) (Campylobacter pylori J99), this protein is Elongation factor Tu.